The following is a 126-amino-acid chain: Large ribosomal subunit protein uL22 (126 aa).

It belongs to the universal ribosomal protein uL22 family. As to quaternary structure, part of the 50S ribosomal subunit.

Functionally, this protein binds specifically to 23S rRNA; its binding is stimulated by other ribosomal proteins, e.g. L4, L17, and L20. It is important during the early stages of 50S assembly. It makes multiple contacts with different domains of the 23S rRNA in the assembled 50S subunit and ribosome. The globular domain of the protein is located near the polypeptide exit tunnel on the outside of the subunit, while an extended beta-hairpin is found that lines the wall of the exit tunnel in the center of the 70S ribosome. The polypeptide is Large ribosomal subunit protein uL22 (Dinoroseobacter shibae (strain DSM 16493 / NCIMB 14021 / DFL 12)).